We begin with the raw amino-acid sequence, 402 residues long: CinA-like protein (402 aa).

This sequence belongs to the CinA family.

The sequence is that of CinA-like protein from Fusobacterium nucleatum subsp. nucleatum (strain ATCC 25586 / DSM 15643 / BCRC 10681 / CIP 101130 / JCM 8532 / KCTC 2640 / LMG 13131 / VPI 4355).